Reading from the N-terminus, the 316-residue chain is L-lactate dehydrogenase (316 aa).

NAD(+)-binding positions include Val-15, Asp-37, Lys-42, Tyr-68, and 82–83; that span reads GL. Substrate is bound by residues Gln-85, Arg-91, and 123–126; that span reads NPVD. Residues 121 to 123 and Thr-146 each bind NAD(+); that span reads ASN. 151-154 provides a ligand contact to substrate; that stretch reads DTSR. Residues Arg-156 and His-171 each coordinate beta-D-fructose 1,6-bisphosphate. His-178 (proton acceptor) is an active-site residue. A Phosphotyrosine modification is found at Tyr-222. Substrate is bound at residue Thr-231.

Belongs to the LDH/MDH superfamily. LDH family. As to quaternary structure, homotetramer.

Its subcellular location is the cytoplasm. It catalyses the reaction (S)-lactate + NAD(+) = pyruvate + NADH + H(+). Its pathway is fermentation; pyruvate fermentation to lactate; (S)-lactate from pyruvate: step 1/1. Allosterically activated by fructose 1,6-bisphosphate (FBP). Its function is as follows. Catalyzes the conversion of lactate to pyruvate. The protein is L-lactate dehydrogenase of Borrelia garinii subsp. bavariensis (strain ATCC BAA-2496 / DSM 23469 / PBi) (Borreliella bavariensis).